The sequence spans 63 residues: Large ribosomal subunit protein uL30 (63 aa).

Belongs to the universal ribosomal protein uL30 family. Part of the 50S ribosomal subunit.

The chain is Large ribosomal subunit protein uL30 from Chlorobium chlorochromatii (strain CaD3).